The chain runs to 100 residues: Urease subunit gamma (100 aa).

It belongs to the urease gamma subunit family. Heterotrimer of UreA (gamma), UreB (beta) and UreC (alpha) subunits. Three heterotrimers associate to form the active enzyme.

It is found in the cytoplasm. The enzyme catalyses urea + 2 H2O + H(+) = hydrogencarbonate + 2 NH4(+). The protein operates within nitrogen metabolism; urea degradation; CO(2) and NH(3) from urea (urease route): step 1/1. This is Urease subunit gamma from Opitutus terrae (strain DSM 11246 / JCM 15787 / PB90-1).